The following is a 112-amino-acid chain: MVSVKKVKKSQENIGSKLALVMKSGKSQLGYKSTLKTLRAGKSKLILLASNLPSIRRSEIEYYAMLSKTTVHLYSGNNVDLGTALGRHYRVSVMSITDAGDSDILTALNAKA.

It belongs to the eukaryotic ribosomal protein eL30 family.

The chain is Large ribosomal subunit protein eL30 (rpl30) from Dictyostelium discoideum (Social amoeba).